Consider the following 198-residue polypeptide: uncharacterized protein (198 aa).

The protein localises to the cytoplasm. This is an uncharacterized protein from Saccharomyces cerevisiae (strain ATCC 204508 / S288c) (Baker's yeast).